The following is a 247-amino-acid chain: Putative methyltransferase YqeM (247 aa).

Belongs to the methyltransferase superfamily.

Functionally, may be a S-adenosyl-L-methionine (SAM)-dependent methyltransferase. The sequence is that of Putative methyltransferase YqeM (yqeM) from Bacillus subtilis (strain 168).